Here is a 517-residue protein sequence, read N- to C-terminus: Bifunctional purine biosynthesis protein PurH (517 aa).

One can recognise an MGS-like domain in the interval 1-146; that stretch reads MAPIALLSVS…KNHAHVAVLT (146 aa).

The protein belongs to the PurH family.

It catalyses the reaction (6R)-10-formyltetrahydrofolate + 5-amino-1-(5-phospho-beta-D-ribosyl)imidazole-4-carboxamide = 5-formamido-1-(5-phospho-D-ribosyl)imidazole-4-carboxamide + (6S)-5,6,7,8-tetrahydrofolate. It carries out the reaction IMP + H2O = 5-formamido-1-(5-phospho-D-ribosyl)imidazole-4-carboxamide. It participates in purine metabolism; IMP biosynthesis via de novo pathway; 5-formamido-1-(5-phospho-D-ribosyl)imidazole-4-carboxamide from 5-amino-1-(5-phospho-D-ribosyl)imidazole-4-carboxamide (10-formyl THF route): step 1/1. Its pathway is purine metabolism; IMP biosynthesis via de novo pathway; IMP from 5-formamido-1-(5-phospho-D-ribosyl)imidazole-4-carboxamide: step 1/1. This chain is Bifunctional purine biosynthesis protein PurH, found in Prochlorococcus marinus (strain MIT 9313).